The following is a 141-amino-acid chain: Putative ankyrin repeat protein FPV223 (141 aa).

4 ANK repeats span residues 21–50 (SGRTSLHYAVLFNHKRALSFLLARGADVFK), 54–83 (CMCTPLYYAMLSDQRDMVTMLLHSKKYIVK), 85–114 (RNKLDLHNAIETGNIKVIKTLLDNGVNENS), and 118–140 (DGLTPLHYAVKYGNISIVKMFVI).

This chain is Putative ankyrin repeat protein FPV223, found in Vertebrata (FPV).